The chain runs to 590 residues: Beta-fructofuranosidase, insoluble isoenzyme CWINV2 (590 aa).

A signal peptide spans 1-25; sequence MSAPKFGYVLLLIVLINISNNGVDA. Substrate contacts are provided by residues 59-62, glutamine 78, and tryptophan 86; that span reads WIND. Residue aspartate 62 is part of the active site. An N-linked (GlcNAc...) asparagine glycan is attached at asparagine 118. 121 to 122 serves as a coordination point for substrate; that stretch reads WS. N-linked (GlcNAc...) asparagine glycans are attached at residues asparagine 143 and asparagine 180. Substrate contacts are provided by residues 185 to 186, glutamate 241, and aspartate 275; that span reads RD. Asparagine 335 is a glycosylation site (N-linked (GlcNAc...) asparagine). A disulfide bridge links cysteine 435 with cysteine 483. An N-linked (GlcNAc...) asparagine glycan is attached at asparagine 564.

The protein belongs to the glycosyl hydrolase 32 family. Expressed in flowers, and seeds.

The protein resides in the secreted. The protein localises to the extracellular space. Its subcellular location is the apoplast. It is found in the cell wall. It carries out the reaction Hydrolysis of terminal non-reducing beta-D-fructofuranoside residues in beta-D-fructofuranosides.. This chain is Beta-fructofuranosidase, insoluble isoenzyme CWINV2 (CWINV2), found in Arabidopsis thaliana (Mouse-ear cress).